We begin with the raw amino-acid sequence, 363 residues long: Protein-arginine kinase (363 aa).

The region spanning 24 to 254 (IVLSSRIRLA…AQLIEQERSA (231 aa)) is the Phosphagen kinase C-terminal domain. Residues 27–31 (SSRIR), His-92, Arg-125, 176–180 (RASVM), and 207–212 (RGIYGE) each bind ATP. Residues 337–342 (RDARRA) carry the RDXXRA motif of the pArg binding pocket involved in allosteric regulation motif.

The protein belongs to the ATP:guanido phosphotransferase family.

The catalysed reaction is L-arginyl-[protein] + ATP = N(omega)-phospho-L-arginyl-[protein] + ADP + H(+). Appears to be allosterically activated by the binding of pArg-containing polypeptides to the pArg-binding pocket localized in the C-terminal domain of McsB. In terms of biological role, catalyzes the specific phosphorylation of arginine residues in a large number of proteins. Is part of the bacterial stress response system. Protein arginine phosphorylation has a physiologically important role and is involved in the regulation of many critical cellular processes, such as protein homeostasis, motility, competence, and stringent and stress responses, by regulating gene expression and protein activity. This chain is Protein-arginine kinase, found in Bacillus velezensis (strain DSM 23117 / BGSC 10A6 / LMG 26770 / FZB42) (Bacillus amyloliquefaciens subsp. plantarum).